The chain runs to 681 residues: Methionine--tRNA ligase (681 aa).

The short motif at 14–24 (PYANGSIHLGH) is the 'HIGH' region element. Zn(2+) is bound by residues Cys-145, Cys-148, Cys-158, and Cys-161. The 'KMSKS' region motif lies at 331–335 (KMSKS). ATP is bound at residue Lys-334. In terms of domain architecture, tRNA-binding spans 579–681 (AFAAIDLRVA…SGAKPGQRIK (103 aa)).

The protein belongs to the class-I aminoacyl-tRNA synthetase family. MetG type 1 subfamily. Homodimer. Requires Zn(2+) as cofactor.

It localises to the cytoplasm. It carries out the reaction tRNA(Met) + L-methionine + ATP = L-methionyl-tRNA(Met) + AMP + diphosphate. Is required not only for elongation of protein synthesis but also for the initiation of all mRNA translation through initiator tRNA(fMet) aminoacylation. This is Methionine--tRNA ligase from Pseudomonas fluorescens (strain ATCC BAA-477 / NRRL B-23932 / Pf-5).